The following is a 233-amino-acid chain: Glyceraldehyde 3-phosphate phosphatase (233 aa).

It belongs to the HAD-like hydrolase superfamily. It depends on Mg(2+) as a cofactor.

Functionally, catalyzes the dephosphorylation of D,L-glyceraldehyde 3-phosphate in vitro. The protein is Glyceraldehyde 3-phosphate phosphatase of Methanopyrus kandleri (strain AV19 / DSM 6324 / JCM 9639 / NBRC 100938).